Consider the following 531-residue polypeptide: Poly(A)-specific ribonuclease PNLDC1 (531 aa).

The Mg(2+) site is built by Asp-28, Glu-30, Asp-271, and Asp-365. The helical transmembrane segment at 506–526 threads the bilayer; sequence ITCLLQVCSIVTTWAMIAFLL.

Belongs to the CAF1 family. Mg(2+) serves as cofactor. Specifically expressed in embryonic stem cells. Highly expressed in testis.

It localises to the endoplasmic reticulum membrane. The catalysed reaction is Exonucleolytic cleavage of poly(A) to 5'-AMP.. 3'-exoribonuclease that has a preference for poly(A) tails of mRNAs, thereby efficiently degrading poly(A) tails. Exonucleolytic degradation of the poly(A) tail is often the first step in the decay of eukaryotic mRNAs and is also used to silence certain maternal mRNAs translationally during oocyte maturation and early embryonic development. May act as a regulator of multipotency in embryonic stem cells. Is a critical factor for proper spermatogenesis, involved in pre-piRNAs processing to generate mature piRNAs. This Mus musculus (Mouse) protein is Poly(A)-specific ribonuclease PNLDC1.